The chain runs to 644 residues: Mitochondrial 15S rRNA processing factor CCM1 (644 aa).

The N-terminal 38 residues, 1–38 (MVIVASSNMLRPDRIWLCGKYQTARTLYVVGNKSKRRN), are a transit peptide targeting the mitochondrion. The tract at residues 78-108 (ISKKSEKEVERSQIQSTEPSPETSTQLTQKN) is disordered. Over residues 89 to 108 (SQIQSTEPSPETSTQLTQKN) the composition is skewed to polar residues. 3 PPR repeats span residues 245–279 (PRET…GLQP), 280–315 (SKNT…SDKT), and 318–352 (AERA…KVEV).

This sequence belongs to the CCM1 family. In terms of assembly, binds to mitochondrial small subunit 15S rRNA.

Its subcellular location is the mitochondrion. Functionally, regulates mitochondrial small subunit maturation by controlling 15S rRNA 5'-end processing. Localizes to the 5' precursor of the 15S rRNA in a position that is subsequently occupied by mS47 in the mature yeast mtSSU. Uses structure and sequence-specific RNA recognition, binding to a single-stranded region of the precursor and specifically recognizing bases -6 to -1. The exchange of Ccm1 for mS47 is coupled to the irreversible removal of precursor rRNA that is accompanied by conformational changes of the mitoribosomal proteins uS5m and mS26. These conformational changes signal completion of 5'-end rRNA processing through protection of the mature 5'-end of the 15S rRNA and stabilization of mS47. The removal of the 5' precursor together with the dissociation of Ccm1 may be catalyzed by the 5'-3' exoribonuclease Pet127. Involved in the specific removal of group I introns in mitochondrial encoded transcripts. The polypeptide is Mitochondrial 15S rRNA processing factor CCM1 (CCM1) (Meyerozyma guilliermondii (strain ATCC 6260 / CBS 566 / DSM 6381 / JCM 1539 / NBRC 10279 / NRRL Y-324) (Yeast)).